The chain runs to 175 residues: Alpha-crystallin B chain (175 aa).

The residue at position 1 (Met1) is an N-acetylmethionine. A phosphoserine mark is found at Ser19, Ser45, and Ser59. In terms of domain architecture, sHSP spans 56–164 (RAPSWIDTGL…PERTIPITRE (109 aa)). Residue His83 participates in Zn(2+) binding. Lys92 carries the post-translational modification N6-acetyllysine. Residues His104, Glu106, His111, and His119 each coordinate Zn(2+). Residues 145–175 (VNGPRKQASGPERTIPITREEKPAVTAAPKK) are disordered. Lys166 bears the N6-acetyllysine mark. A glycan (O-linked (GlcNAc) threonine) is linked at Thr170.

It belongs to the small heat shock protein (HSP20) family. In terms of assembly, heteromer composed of three CRYAA and one CRYAB subunits. Aggregates with homologous proteins, including the small heat shock protein HSPB1, to form large heteromeric complexes. Inter-subunit bridging via zinc ions enhances stability, which is crucial as there is no protein turn over in the lens. Interacts with HSPBAP1 and TTN/titin. Interacts with TMEM109; in the cellular response to DNA damage. Interacts with DES; binds rapidly during early stages of DES filament assembly and a reduced binding seen in the later stages. Interacts with TMED10; the interaction mediates the translocation from the cytoplasm into the ERGIC (endoplasmic reticulum-Golgi intermediate compartment) and thereby secretion. Interacts with ATP6V1A and with MTOR, forming a ternary complex. Lens as well as other tissues.

It is found in the cytoplasm. The protein resides in the nucleus. Its subcellular location is the secreted. It localises to the lysosome. Functionally, may contribute to the transparency and refractive index of the lens. Has chaperone-like activity, preventing aggregation of various proteins under a wide range of stress conditions. In lens epithelial cells, stabilizes the ATP6V1A protein, preventing its degradation by the proteasome. The polypeptide is Alpha-crystallin B chain (CRYAB) (Mesocricetus auratus (Golden hamster)).